The following is a 470-amino-acid chain: Uronate isomerase (470 aa).

The protein belongs to the metallo-dependent hydrolases superfamily. Uronate isomerase family.

It catalyses the reaction D-glucuronate = D-fructuronate. It carries out the reaction aldehydo-D-galacturonate = keto-D-tagaturonate. It functions in the pathway carbohydrate metabolism; pentose and glucuronate interconversion. In Escherichia coli O157:H7 (strain EC4115 / EHEC), this protein is Uronate isomerase.